The primary structure comprises 201 residues: Fas apoptotic inhibitory molecule 1 (201 aa).

Belongs to the FAIM1 family.

The protein localises to the cytoplasm. Its function is as follows. Plays a role as an inducible effector molecule that mediates Fas resistance produced by surface Ig engagement in B cells. The chain is Fas apoptotic inhibitory molecule 1 (Faim) from Rattus norvegicus (Rat).